The sequence spans 1098 residues: Bifunctional helicase and thymine dioxygenase JBP2 (1098 aa).

The thymine dioxygenase stretch occupies residues 1–540 (MLNGLTRVST…PPLFVPTRLA (540 aa)). Fe cation contacts are provided by histidine 415, aspartate 417, and histidine 465. 2-oxoglutarate is bound at residue arginine 479. Residues 541–1098 (SHLAPVQLAA…RYQESVRESE (558 aa)) form a DNA Helicase region. In terms of domain architecture, Helicase ATP-binding spans 555–730 (VERTEKQSGC…YRLVGWVNKG (176 aa)). 568–575 (MTMGLGKT) provides a ligand contact to ATP. A DEAH box motif is present at residues 681–684 (DEGH). The region spanning 897–1057 (VLVDIVLRVQ…ALPDELEDCA (161 aa)) is the Helicase C-terminal domain.

It in the C-terminal section; belongs to the SNF2/RAD54 helicase family. The protein in the N-terminal section; belongs to the TET family. JBP2 subfamily. It depends on Fe(2+) as a cofactor.

The protein localises to the nucleus. The enzyme catalyses ATP + H2O = ADP + phosphate + H(+). The catalysed reaction is thymine + 2-oxoglutarate + O2 = 5-hydroxymethyluracil + succinate + CO2. Its function is as follows. Dioxygenase that catalyzes the first step of DNA base J (beta-d-glucosyl-HOMedU) biosynthesis by converting thymine to 5-hydroxymethyluracil (HOMedU). DNA base J is a hypermodified thymidine residue found in the genome of kinetoplastid parasites, which is localized primarily to repetitive DNA, namely the telomeres, and is implicated in the regulation of antigenic variation. Probably also acts as a DNA helicase. Recognizes and binds specific regions of the genome, hydrolyzes ATP and allows the DNA base J de novo synthesis. Involved in initial synthesis of DNA base J, JBP1 being able to act via the basal level of DNA base J and propagate further synthesis. In contrast to JBP1, it does not specifically bind DNA base J, however it binds chromatin. This Leishmania tarentolae (Sauroleishmania tarentolae) protein is Bifunctional helicase and thymine dioxygenase JBP2 (JBP2).